Consider the following 79-residue polypeptide: Acyl carrier protein (79 aa).

The 76-residue stretch at 2 to 77 folds into the Carrier domain; that stretch reads ENIEQRVKKI…QAIDYVNAHL (76 aa). Ser37 is subject to O-(pantetheine 4'-phosphoryl)serine.

Belongs to the acyl carrier protein (ACP) family. In terms of processing, 4'-phosphopantetheine is transferred from CoA to a specific serine of apo-ACP by AcpS. This modification is essential for activity because fatty acids are bound in thioester linkage to the sulfhydryl of the prosthetic group.

The protein localises to the cytoplasm. It participates in lipid metabolism; fatty acid biosynthesis. Functionally, carrier of the growing fatty acid chain in fatty acid biosynthesis. The polypeptide is Acyl carrier protein (Azoarcus sp. (strain BH72)).